The sequence spans 156 residues: Small ribosomal subunit protein uS7 (156 aa).

As to quaternary structure, part of the 30S ribosomal subunit. Contacts proteins S9 and S11. Binds to the C-terminus of IF3 and to the C-terminus of Era.

Its function is as follows. One of the primary rRNA binding proteins, it binds directly to 3'-end of the 16S rRNA where it nucleates assembly of the head domain of the 30S subunit. Is located at the subunit interface close to the decoding center. Binds mRNA and the E site tRNA blocking its exit path in the ribosome. This blockage implies that this section of the ribosome must be able to move to release the deacetylated tRNA. The protein is Small ribosomal subunit protein uS7 (rpsG) of Thermus thermophilus (strain ATCC 27634 / DSM 579 / HB8).